The chain runs to 192 residues: Probable GTP-binding protein EngB (192 aa).

An EngB-type G domain is found at 22-192; sequence QIPEIVFAGR…LLAHLAQYIR (171 aa). Residues 30-37, 57-61, 75-78, 142-145, and 172-174 each bind GTP; these read GRSNVGKS, GKTRL, DLPG, TKDD, and YSS. Mg(2+)-binding residues include serine 37 and threonine 59.

The protein belongs to the TRAFAC class TrmE-Era-EngA-EngB-Septin-like GTPase superfamily. EngB GTPase family. It depends on Mg(2+) as a cofactor.

In terms of biological role, necessary for normal cell division and for the maintenance of normal septation. This chain is Probable GTP-binding protein EngB, found in Chlorobium phaeobacteroides (strain DSM 266 / SMG 266 / 2430).